The chain runs to 209 residues: Large ribosomal subunit protein bL9 (209 aa).

The tract at residues 169-209 (RDGASFTEDYDPNAEPGLATEAEEAVADADDNAETNSEESL) is disordered. Over residues 189–209 (EAEEAVADADDNAETNSEESL) the composition is skewed to acidic residues.

The protein belongs to the bacterial ribosomal protein bL9 family.

Functionally, binds to the 23S rRNA. The chain is Large ribosomal subunit protein bL9 from Zymomonas mobilis subsp. mobilis (strain ATCC 31821 / ZM4 / CP4).